Reading from the N-terminus, the 143-residue chain is Actin-depolymerizing factor 2 (143 aa).

The ADF-H domain maps to 5–139 (ASGMAVHDDC…GLDVFRSRAG (135 aa)).

It belongs to the actin-binding proteins ADF family.

Actin-depolymerizing protein. Severs actin filaments (F-actin) and binds to actin monomers. The protein is Actin-depolymerizing factor 2 (ADF2) of Petunia hybrida (Petunia).